The primary structure comprises 79 residues: MFSGISIWQLLILLAIVVLLFGTKKLRNIGGDLGGAVKGFKSAMKDGEDEQDHKRLADDDQPQNKQDAEQKAEQEKDKA.

Residues 1-21 (MFSGISIWQLLILLAIVVLLF) traverse the membrane as a helical segment. 2 stretches are compositionally biased toward basic and acidic residues: residues 44–58 (MKDGEDEQDHKRLAD) and 66–79 (QDAEQKAEQEKDKA). A disordered region spans residues 44 to 79 (MKDGEDEQDHKRLADDDQPQNKQDAEQKAEQEKDKA).

Belongs to the TatA/E family. As to quaternary structure, the Tat system comprises two distinct complexes: a TatABC complex, containing multiple copies of TatA, TatB and TatC subunits, and a separate TatA complex, containing only TatA subunits. Substrates initially bind to the TatABC complex, which probably triggers association of the separate TatA complex to form the active translocon.

The protein localises to the cell inner membrane. Part of the twin-arginine translocation (Tat) system that transports large folded proteins containing a characteristic twin-arginine motif in their signal peptide across membranes. TatA could form the protein-conducting channel of the Tat system. The sequence is that of Sec-independent protein translocase protein TatA from Alcanivorax borkumensis (strain ATCC 700651 / DSM 11573 / NCIMB 13689 / SK2).